The following is a 338-amino-acid chain: MAATVGDGSGTEEACRNMESKEEFVKVRKKDLERLTTEVMQIRDFLPRILNGELLESFQKLKMVEKNLERKEQELEQLIMDREHFKARLETAQADSGREKKEKLALRQQLNEAKQQLLQQAEYCTQMGAVTCTLLWGVSSSEEVVKTILGGDKALKFFNITGQTMESFVKSLDGDVKEVDSDENQFVFALAGIVTNVAAIACGREFLVNSSRVLLDTMLQLLGDLKPGQCTKLKVLMLMSLYNVSINSKGLKYITESPGFIPLLWWLLSDPDAEVCLHTLRLIQSVVLEPDVFSKVASELQSSLPLQRILAMSKSRNSHLQSAAQELLEDLRALDCNV.

Residues Met1–Ser20 form a disordered region. The stretch at Glu12–Gln126 forms a coiled coil. Residues Met18–Leu55 form an interaction with BRME1 region. An interaction with BRCA2 region spans residues Ala87–Val338.

As to quaternary structure, interacts (via C-terminus) with BNC1. Associates with HSF2. The interaction seems to occur between the trimerization domain of HSF2 and the N-terminal hydrophilic region of HSF2BP. Interacts (via N-terminus) with BRME1. Interacts with BRCA2 and BRME1; the interactions are direct and allow the formation of a ternary complex. The complex BRME1:HSF2BP:BRCA2 interacts with SPATA22, MEIOB and RAD51. In terms of processing, sumoylated by UBE2I in response to MEKK1-mediated stimuli. Expressed in testis and, to a lesser extent, in lung and muscle.

Its subcellular location is the cytoplasm. It localises to the chromosome. Its function is as follows. Meiotic recombination factor component of recombination bridges involved in meiotic double-strand break repair. Modulates the localization of recombinases DMC1:RAD51 to meiotic double-strand break (DSB) sites through the interaction with BRCA2 and its recruitment during meiotic recombination. Indispensable for the DSB repair, homologous synapsis, and crossover formation that are needed for progression past metaphase I, is essential for spermatogenesis and male fertility. Required for proper recombinase recruitment in female meiosis. Inhibits BNC1 transcriptional activity during spermatogenesis, probably by sequestering it in the cytoplasm. May be involved in modulating HSF2 activation in testis. The chain is Heat shock factor 2-binding protein from Mus musculus (Mouse).